A 294-amino-acid chain; its full sequence is Metallophosphoesterase MPPED2 (294 aa).

The Mn(2+) site is built by aspartate 65, histidine 67, aspartate 86, asparagine 117, and histidine 213. Asparagine 117–histidine 118 is a binding site for GMP. GMP is bound by residues lysine 225–glutamate 226 and glycine 252–glutamate 255. Histidine 254 serves as a coordination point for Mn(2+).

This sequence belongs to the UPF0046 family. In terms of assembly, homodimer. Mn(2+) is required as a cofactor. It depends on Co(2+) as a cofactor.

Inhibited by nmolar levels of AMP and GMP. Functionally, displays low metallophosphoesterase activity (in vitro). May play a role in the development of the nervous system. This chain is Metallophosphoesterase MPPED2 (Mpped2), found in Mus musculus (Mouse).